Here is a 129-residue protein sequence, read N- to C-terminus: Phosphoribosyl-AMP cyclohydrolase (129 aa).

D85 contributes to the Mg(2+) binding site. C86 is a Zn(2+) binding site. The Mg(2+) site is built by D87 and D89. Residues C102 and C109 each contribute to the Zn(2+) site.

The protein belongs to the PRA-CH family. Homodimer. Mg(2+) serves as cofactor. It depends on Zn(2+) as a cofactor.

It is found in the cytoplasm. The enzyme catalyses 1-(5-phospho-beta-D-ribosyl)-5'-AMP + H2O = 1-(5-phospho-beta-D-ribosyl)-5-[(5-phospho-beta-D-ribosylamino)methylideneamino]imidazole-4-carboxamide. It participates in amino-acid biosynthesis; L-histidine biosynthesis; L-histidine from 5-phospho-alpha-D-ribose 1-diphosphate: step 3/9. Its function is as follows. Catalyzes the hydrolysis of the adenine ring of phosphoribosyl-AMP. The sequence is that of Phosphoribosyl-AMP cyclohydrolase from Methanococcus maripaludis (strain C5 / ATCC BAA-1333).